A 269-amino-acid chain; its full sequence is MAQFLRLCIWLLALGSCLLATVQADCSQDCAKCSYRLVRPGDINFLACTLECEGQLPSFKIWETCKDLLQVSKPEFPWDNIDMYKDSSKQDESHLLAKKYGGFMKRYGGFMKKMDELYPVEPEEEANGGEILAKRYGGFMKKDADEGDTLANSSDLLKELLGTGDNRAKDSHQQESTNNDEDSTSKRYGGFMRGLKRSPQLEDEAKELQKRYGGFMRRVGRPEWWMDYQKRYGGFLKRFAESLPSDEEGESYSKEVPEMEKRYGGFMRF.

Positions 1–24 (MAQFLRLCIWLLALGSCLLATVQA) are cleaved as a signal peptide. 3 disulfide bridges follow: cysteine 26-cysteine 48, cysteine 30-cysteine 52, and cysteine 33-cysteine 65. Residues 165-191 (DNRAKDSHQQESTNNDEDSTSKRYGGF) are disordered. Propeptides lie at residues 198–209 (SPQLEDEAKELQ) and 219–229 (VGRPEWWMDYQ). The residue at position 253 (serine 253) is a Phosphoserine.

It belongs to the opioid neuropeptide precursor family. Post-translationally, proenkephalin-A is cleaved by CTSL to generate Met-enkephalin. Processed and degraded by ACE. In terms of processing, probably cleaved by ACE. Post-translationally, processed by ACE to generate Met-enkephalin in the nucleus accumbens of the brain. The N-terminal domain contains 6 conserved cysteines thought to be involved in disulfide bonding and/or processing. Expressed in brain, heart and testis.

The protein localises to the secreted. It localises to the cytoplasmic vesicle. It is found in the secretory vesicle. The protein resides in the chromaffin granule lumen. Functionally, neuropeptide that competes with and mimic the effects of opiate drugs. They play a role in a number of physiologic functions, including pain perception and responses to stress. Met-enkephalin-Arg-Phe neuropeptide acts as a strong ligand of Mu-type opioid receptor OPRM1. Met-enkephalin-Arg-Phe-binding to OPRM1 in the nucleus accumbens of the brain increases activation of OPRM1, leading to long-term synaptic depression of glutamate release. In terms of biological role, increases glutamate release in the striatum and decreases GABA concentration in the striatum. Its function is as follows. Increases glutamate release in the striatum. This Rattus norvegicus (Rat) protein is Proenkephalin-A (Penk).